The primary structure comprises 239 residues: MRKNGRGPLDLRPILLEPRVSKHAEGSCLVRFGDTHVLCTASVDEKVPPHVYGTGAGWVTAEYGMLPRSTHERMQREAARGKQTGRTLEIQRLVGRALRAAVDLRAIGPRTVTLDCDVIQADGGTRTAAITGAYVALVQAVRSIQKRKQLAHDPVKRSVAAVSVGIVAGEVHLDLDYDEDSTAEVDMNVVATGEGALVEVQGTAEGKPFARAELDRMLDAALAGLSRLKELQEAALRTP.

Phosphate is bound by residues R86 and 124-126; that span reads GTR.

Belongs to the RNase PH family. In terms of assembly, homohexameric ring arranged as a trimer of dimers.

The catalysed reaction is tRNA(n+1) + phosphate = tRNA(n) + a ribonucleoside 5'-diphosphate. Phosphorolytic 3'-5' exoribonuclease that plays an important role in tRNA 3'-end maturation. Removes nucleotide residues following the 3'-CCA terminus of tRNAs; can also add nucleotides to the ends of RNA molecules by using nucleoside diphosphates as substrates, but this may not be physiologically important. Probably plays a role in initiation of 16S rRNA degradation (leading to ribosome degradation) during starvation. This is Ribonuclease PH from Anaeromyxobacter dehalogenans (strain 2CP-C).